The following is a 1048-amino-acid chain: Putative truncated guanine nucleotide exchange factor SDC25 (1048 aa).

Disordered regions lie at residues 208–242 and 419–444; these read SKQGTSCSSETSHHSPSAPFQRRRRGTIFSNVSGS and LNLDNAKDKKNGSQNTDIQEEEDEYE. Positions 212 to 224 are enriched in low complexity; sequence TSCSSETSHHSPS. Positions 578–710 constitute an N-terminal Ras-GEF domain; sequence SNNRIKGGSK…LLKEVNQKFK (133 aa). One can recognise a Ras-GEF domain in the interval 748–995; sequence DPVLFATQLT…YQLSLIIEPK (248 aa). Positions 997-1048 are disordered; the sequence is RKKVVPNSNSNNKSQEKSRDDQTDEGKTSTKKDRFPKFQLHKTKKKAPKVSK. Over residues 1010–1032 the composition is skewed to basic and acidic residues; the sequence is SQEKSRDDQTDEGKTSTKKDRFP. Residues 1035-1048 are compositionally biased toward basic residues; that stretch reads QLHKTKKKAPKVSK.

Its function is as follows. Promotes the exchange of Ras-bound GDP by GTP. This chain is Putative truncated guanine nucleotide exchange factor SDC25 (SDC25), found in Saccharomyces cerevisiae (strain ATCC 204508 / S288c) (Baker's yeast).